The following is a 353-amino-acid chain: Terpene synthase 1 (353 aa).

Positions 81-86 match the DDxx(x)D/E motif motif; it reads DDAIDA. An NDxxSxxxD/E motif motif is present at residues 222-230; that stretch reads NDLVSYEKE.

The protein belongs to the terpene synthase family.

It carries out the reaction (2E,6E)-farnesyl diphosphate = (2S,3R,6S,9S)-(-)-protoillud-7-ene + diphosphate. In terms of biological role, terpene synthase that converts its substrate farnesyl diphosphate (FPP) into the sesquiterpene protoillud-7-ene. The polypeptide is Terpene synthase 1 (Tieghemostelium lacteum (Slime mold)).